Reading from the N-terminus, the 59-residue chain is Large ribosomal subunit protein uL30 (59 aa).

This sequence belongs to the universal ribosomal protein uL30 family. As to quaternary structure, part of the 50S ribosomal subunit.

The sequence is that of Large ribosomal subunit protein uL30 from Staphylococcus aureus (strain JH1).